We begin with the raw amino-acid sequence, 434 residues long: Enolase (434 aa).

Residue glutamine 163 coordinates (2R)-2-phosphoglycerate. Residue glutamate 205 is the Proton donor of the active site. Positions 242, 291, and 318 each coordinate Mg(2+). (2R)-2-phosphoglycerate-binding residues include lysine 343, arginine 372, serine 373, and lysine 394. The Proton acceptor role is filled by lysine 343.

Belongs to the enolase family. Mg(2+) serves as cofactor.

It is found in the cytoplasm. Its subcellular location is the secreted. The protein localises to the cell surface. The catalysed reaction is (2R)-2-phosphoglycerate = phosphoenolpyruvate + H2O. It functions in the pathway carbohydrate degradation; glycolysis; pyruvate from D-glyceraldehyde 3-phosphate: step 4/5. Its function is as follows. Catalyzes the reversible conversion of 2-phosphoglycerate (2-PG) into phosphoenolpyruvate (PEP). It is essential for the degradation of carbohydrates via glycolysis. In Streptococcus gordonii (strain Challis / ATCC 35105 / BCRC 15272 / CH1 / DL1 / V288), this protein is Enolase.